A 360-amino-acid polypeptide reads, in one-letter code: Probable CCR4-associated factor 1 homolog 1 (360 aa).

4 residues coordinate a divalent metal cation: Asp37, Glu39, Asp155, and Asp226.

The protein belongs to the CAF1 family. As to quaternary structure, component of the CCR4-NOT complex, at least composed of CRR4 and CAF1 proteins. The cofactor is a divalent metal cation.

Its subcellular location is the nucleus. It localises to the cytoplasm. The enzyme catalyses Exonucleolytic cleavage of poly(A) to 5'-AMP.. Ubiquitous transcription factor required for a diverse set of processes. It is a component of the CCR4 complex involved in the control of gene expression. The chain is Probable CCR4-associated factor 1 homolog 1 (CAF1-1) from Arabidopsis thaliana (Mouse-ear cress).